The chain runs to 100 residues: Small ribosomal subunit protein uS14c (100 aa).

This sequence belongs to the universal ribosomal protein uS14 family. As to quaternary structure, part of the 30S ribosomal subunit.

Its subcellular location is the plastid. The protein resides in the chloroplast. Binds 16S rRNA, required for the assembly of 30S particles. The chain is Small ribosomal subunit protein uS14c from Pleurastrum terricola (Filamentous green alga).